The chain runs to 504 residues: Anaerobic nitric oxide reductase transcription regulator NorR (504 aa).

4-aspartylphosphate is present on Asp-57. The region spanning Met-187–Val-416 is the Sigma-54 factor interaction domain. ATP is bound by residues Gly-215 to Glu-222 and Ala-278 to Glu-287. A DNA-binding region (H-T-H motif) is located at residues Trp-479–Lys-498.

It functions in the pathway nitrogen metabolism; nitric oxide reduction. Required for the expression of anaerobic nitric oxide (NO) reductase, acts as a transcriptional activator for at least the norVW operon. Activation also requires sigma-54. The chain is Anaerobic nitric oxide reductase transcription regulator NorR from Escherichia coli O157:H7.